Consider the following 517-residue polypeptide: L-amino-acid oxidase (517 aa).

Residues 1–19 (MNVFSIFSLVFLAAFGSCA) form the signal peptide. A disulfide bridge connects residues cysteine 29 and cysteine 192. Residues 62–63 (MA), 82–83 (EA), arginine 90, and 106–109 (GPMR) each bind FAD. Arginine 109 is a binding site for substrate. Asparagine 191 carries N-linked (GlcNAc...) asparagine glycosylation. Valine 280 provides a ligand contact to FAD. A disulfide bridge links cysteine 350 with cysteine 431. N-linked (GlcNAc...) asparagine glycosylation is present at asparagine 380. Tyrosine 391 contacts substrate. Residues glutamate 476 and 483 to 488 (GWLDST) contribute to the FAD site. 483–484 (GW) serves as a coordination point for substrate.

This sequence belongs to the flavin monoamine oxidase family. FIG1 subfamily. Monomer. This is in contrast with most of its orthologs, that are non-covalently linked homodimers. FAD is required as a cofactor. N-glycosylated. In terms of tissue distribution, expressed by the venom gland.

Its subcellular location is the secreted. The enzyme catalyses an L-alpha-amino acid + O2 + H2O = a 2-oxocarboxylate + H2O2 + NH4(+). It catalyses the reaction L-leucine + O2 + H2O = 4-methyl-2-oxopentanoate + H2O2 + NH4(+). The catalysed reaction is L-phenylalanine + O2 + H2O = 3-phenylpyruvate + H2O2 + NH4(+). It carries out the reaction L-tryptophan + O2 + H2O = indole-3-pyruvate + H2O2 + NH4(+). The enzyme catalyses L-methionine + O2 + H2O = 4-methylsulfanyl-2-oxobutanoate + H2O2 + NH4(+). It catalyses the reaction L-isoleucine + O2 + H2O = (S)-3-methyl-2-oxopentanoate + H2O2 + NH4(+). The catalysed reaction is L-arginine + O2 + H2O = 5-guanidino-2-oxopentanoate + H2O2 + NH4(+). It carries out the reaction L-aspartate + O2 + H2O = oxaloacetate + H2O2 + NH4(+). The enzyme catalyses L-histidine + O2 + H2O = 3-(imidazol-5-yl)pyruvate + H2O2 + NH4(+). It catalyses the reaction L-asparagine + O2 + H2O = 2-oxosuccinamate + H2O2 + NH4(+). The catalysed reaction is L-tyrosine + O2 + H2O = 3-(4-hydroxyphenyl)pyruvate + H2O2 + NH4(+). It carries out the reaction L-glutamine + O2 + H2O = 2-oxoglutaramate + H2O2 + NH4(+). The enzyme catalyses L-alanine + O2 + H2O = pyruvate + H2O2 + NH4(+). It catalyses the reaction L-lysine + O2 + H2O = 6-amino-2-oxohexanoate + H2O2 + NH4(+). The catalysed reaction is L-glutamate + O2 + H2O = H2O2 + 2-oxoglutarate + NH4(+). Its function is as follows. Catalyzes an oxidative deamination of predominantly hydrophobic and aromatic L-amino acids, thus producing hydrogen peroxide that may contribute to the diverse toxic effects of this enzyme. Is highly active against L-Tyr, L-Asp, L-Phe, L-Glu, L-Trp, L-His, L-Gln, L-Ile, L-Met, L-Leu and moderately active against L-Lys, L-Arg, L-Ala and L-Asn. Exhibits diverse biological activities, such as edema, inflammatory cell infiltration, cytotoxicity and apoptosis, as well as induction of platelet aggregation. Effects of snake L-amino oxidases on platelets are controversial, since they either induce aggregation or inhibit agonist-induced aggregation. These different effects are probably due to different experimental conditions. This protein may also induce hemorrhage, hemolysis, and have antibacterial and antiparasitic activities. This is L-amino-acid oxidase from Bungarus fasciatus (Banded krait).